Reading from the N-terminus, the 1297-residue chain is Phosphoribosylformylglycinamidine synthase (1297 aa).

The disordered stretch occupies residues 305–324 (FPGAATGSGGEIRDEGATGR). Residue 307 to 318 (GAATGSGGEIRD) coordinates ATP. Mg(2+) is bound by residues Asp679, Glu718, Asn722, and Asp886. Ser888 provides a ligand contact to ATP. Residues 1044 to 1297 (IAVLREQGVN…LFRNARVFFK (254 aa)) form the Glutamine amidotransferase type-1 domain. The Nucleophile role is filled by Cys1137. Catalysis depends on residues His1262 and Glu1264.

This sequence in the N-terminal section; belongs to the FGAMS family. In terms of assembly, monomer.

It localises to the cytoplasm. It carries out the reaction N(2)-formyl-N(1)-(5-phospho-beta-D-ribosyl)glycinamide + L-glutamine + ATP + H2O = 2-formamido-N(1)-(5-O-phospho-beta-D-ribosyl)acetamidine + L-glutamate + ADP + phosphate + H(+). Its pathway is purine metabolism; IMP biosynthesis via de novo pathway; 5-amino-1-(5-phospho-D-ribosyl)imidazole from N(2)-formyl-N(1)-(5-phospho-D-ribosyl)glycinamide: step 1/2. In terms of biological role, phosphoribosylformylglycinamidine synthase involved in the purines biosynthetic pathway. Catalyzes the ATP-dependent conversion of formylglycinamide ribonucleotide (FGAR) and glutamine to yield formylglycinamidine ribonucleotide (FGAM) and glutamate. In Mannheimia succiniciproducens (strain KCTC 0769BP / MBEL55E), this protein is Phosphoribosylformylglycinamidine synthase.